The primary structure comprises 169 residues: Nucleoside diphosphate kinase 3 (169 aa).

Positions 29, 105, 111, 122, 129, and 132 each coordinate ADP. The active-site Pros-phosphohistidine intermediate is the histidine 135.

Belongs to the NDK family. In terms of assembly, homohexamer. Interacts (via its N-terminal region) with KAT5; this interaction enables recruitment of NME3 at DNA damage sites where it plays a role in the repair of DNA. Found in association with several ciliary nephronophthisis proteins, including NEK8, CEP164, ANKS6. Mg(2+) is required as a cofactor.

The protein resides in the mitochondrion outer membrane. Its subcellular location is the cytoplasm. It localises to the cytoskeleton. The protein localises to the cilium basal body. The catalysed reaction is a 2'-deoxyribonucleoside 5'-diphosphate + ATP = a 2'-deoxyribonucleoside 5'-triphosphate + ADP. It carries out the reaction a ribonucleoside 5'-diphosphate + ATP = a ribonucleoside 5'-triphosphate + ADP. Its function is as follows. Catalyzes the phosphorylation of ribonucleosides and deoxyribonucleoside diphosphates, other than ATP, into the corresponding triphosphates with ATP as the major phosphate donor. The ATP gamma phosphate is transferred to the nucleoside diphosphate beta phosphate via a ping-pong mechanism, using a phosphorylated active-site intermediate. Through the catalyzed exchange of gamma-phosphate between di- and triphosphonucleosides participates in regulation of intracellular nucleotide homeostasis. Inhibits granulocyte differentiation. May be required for ciliary function during renal development. In terms of biological role, independently of its kinase activity, facilitates mitochondrial tethering prior to membrane fusion through its direct membrane-binding and hexamerization. Implicated in repair of both single- and double-stranded breaks in DNA through its association with the ribonucleotide reductase complex (RNR complex) via its interaction with the histone acetyltransferase KAT5, this interaction enables recruitment of NME3 at DNA damage sites where it plays a role in the repair of DNA, independently of its kinase activity. This chain is Nucleoside diphosphate kinase 3 (Nme3), found in Mus musculus (Mouse).